The sequence spans 356 residues: Probable dual-specificity RNA methyltransferase RlmN (356 aa).

Glu-92 (proton acceptor) is an active-site residue. Positions 98–336 constitute a Radical SAM core domain; the sequence is HKYGFSVCVT…CGVRLEHGTD (239 aa). Cys-105 and Cys-341 are oxidised to a cystine. [4Fe-4S] cluster is bound by residues Cys-112, Cys-116, and Cys-119. Residues 164–165, Ser-196, 219–221, and Asn-297 each bind S-adenosyl-L-methionine; these read GE and SLH. Residue Cys-341 is the S-methylcysteine intermediate of the active site.

It belongs to the radical SAM superfamily. RlmN family. It depends on [4Fe-4S] cluster as a cofactor.

It is found in the cytoplasm. It catalyses the reaction adenosine(2503) in 23S rRNA + 2 reduced [2Fe-2S]-[ferredoxin] + 2 S-adenosyl-L-methionine = 2-methyladenosine(2503) in 23S rRNA + 5'-deoxyadenosine + L-methionine + 2 oxidized [2Fe-2S]-[ferredoxin] + S-adenosyl-L-homocysteine. The catalysed reaction is adenosine(37) in tRNA + 2 reduced [2Fe-2S]-[ferredoxin] + 2 S-adenosyl-L-methionine = 2-methyladenosine(37) in tRNA + 5'-deoxyadenosine + L-methionine + 2 oxidized [2Fe-2S]-[ferredoxin] + S-adenosyl-L-homocysteine. Its function is as follows. Specifically methylates position 2 of adenine 2503 in 23S rRNA and position 2 of adenine 37 in tRNAs. This chain is Probable dual-specificity RNA methyltransferase RlmN, found in Shouchella clausii (strain KSM-K16) (Alkalihalobacillus clausii).